A 168-amino-acid polypeptide reads, in one-letter code: Dihydrofolate reductase (168 aa).

The region spanning Met1–Lys164 is the DHFR domain. A substrate-binding site is contributed by Ile5–Ala7. NADP(+) is bound by residues Trp6–Ala7 and Ile14–Lys19. Residue Glu27 coordinates substrate. Gly43 to Thr46 is a binding site for NADP(+). Arg58 lines the substrate pocket. NADP(+) is bound by residues Leu63–Asp66 and Thr99–Ile104. Thr118 serves as a coordination point for substrate.

It belongs to the dihydrofolate reductase family.

It catalyses the reaction (6S)-5,6,7,8-tetrahydrofolate + NADP(+) = 7,8-dihydrofolate + NADPH + H(+). It functions in the pathway cofactor biosynthesis; tetrahydrofolate biosynthesis; 5,6,7,8-tetrahydrofolate from 7,8-dihydrofolate: step 1/1. Key enzyme in folate metabolism. Catalyzes an essential reaction for de novo glycine and purine synthesis, and for DNA precursor synthesis. In Lactococcus lactis subsp. lactis (strain IL1403) (Streptococcus lactis), this protein is Dihydrofolate reductase (folA).